A 66-amino-acid chain; its full sequence is U10-theraphotoxin-Cg1a 1 (66 aa).

The first 21 residues, 1-21 (MKTSVLFVIFGLALLFCLSFA), serve as a signal peptide directing secretion. Positions 22 to 29 (AELEDTGR) are excised as a propeptide. Cystine bridges form between Cys31/Cys46, Cys38/Cys51, and Cys45/Cys58.

This sequence belongs to the neurotoxin 10 (Hwtx-1) family. 29 (Jztx-13) subfamily. Expressed by the venom gland.

It localises to the secreted. Functionally, probable ion channel inhibitor. This is U10-theraphotoxin-Cg1a 1 from Chilobrachys guangxiensis (Chinese earth tiger tarantula).